Consider the following 216-residue polypeptide: DNA replication complex GINS protein psf1 (216 aa).

Residues 110–133 (QTTGGPKGVTEGNEGGGTTSSLSP) form a disordered region. A compositionally biased stretch (gly residues) spans 111–127 (TTGGPKGVTEGNEGGGT).

Belongs to the GINS1/PSF1 family. Component of the GINS complex which is a heterotetramer of div-26/sld5, drc-1/psf1, drc-2/psf2 and drc-3/psf3.

It is found in the nucleus. Its function is as follows. The GINS complex plays an essential role in the initiation of DNA replication. This Neurospora crassa (strain ATCC 24698 / 74-OR23-1A / CBS 708.71 / DSM 1257 / FGSC 987) protein is DNA replication complex GINS protein psf1 (drc-1).